Reading from the N-terminus, the 206-residue chain is MPFMPVPYVIEQTHRGERSYDIISRLLKDRIVMLGTEIDDDVANVIVAQLLFLESEDPDKDINLYINSPGGSVTAGLAIYDTMQYVKCPVSTICVGQAASMGAVLLLAGAKGKRYALPSSRIMIHQPLGGVRGQATDIEIQAKEILRMKAKLNELIVKHTGQSIERVEKDTDRDYFMGASEAKAYGIIDEIQNPRKVVGLGKEEKK.

Ser-100 (nucleophile) is an active-site residue. The active site involves His-125.

It belongs to the peptidase S14 family. As to quaternary structure, fourteen ClpP subunits assemble into 2 heptameric rings which stack back to back to give a disk-like structure with a central cavity, resembling the structure of eukaryotic proteasomes.

The protein resides in the cytoplasm. The catalysed reaction is Hydrolysis of proteins to small peptides in the presence of ATP and magnesium. alpha-casein is the usual test substrate. In the absence of ATP, only oligopeptides shorter than five residues are hydrolyzed (such as succinyl-Leu-Tyr-|-NHMec, and Leu-Tyr-Leu-|-Tyr-Trp, in which cleavage of the -Tyr-|-Leu- and -Tyr-|-Trp bonds also occurs).. Cleaves peptides in various proteins in a process that requires ATP hydrolysis. Has a chymotrypsin-like activity. Plays a major role in the degradation of misfolded proteins. The sequence is that of ATP-dependent Clp protease proteolytic subunit 2 from Myxococcus xanthus.